Here is a 94-residue protein sequence, read N- to C-terminus: Small ribosomal subunit protein uS17 (94 aa).

The interval 1–22 (MSEQTSAASTTDRGDRKTRRGY) is disordered.

The protein belongs to the universal ribosomal protein uS17 family. As to quaternary structure, part of the 30S ribosomal subunit.

One of the primary rRNA binding proteins, it binds specifically to the 5'-end of 16S ribosomal RNA. The polypeptide is Small ribosomal subunit protein uS17 (Kineococcus radiotolerans (strain ATCC BAA-149 / DSM 14245 / SRS30216)).